The primary structure comprises 793 residues: MPAGPVQAVPPPPPVPTEPKQPTEEEASSKEDSAPSKPVVGIIYPPPEVRNIVDKTASFVARNGPEFEARIRQNEINNPKFNFLNPNDPYHAYYRHKVSEFKEGKAQEPSAAIPKVMQQQQQTTQQQLPQKVQAQVIQETIVPKEPPPEFEFIADPPSISAFDLDVVKLTAQFVARNGRQFLTQLMQKEQRNYQFDFLRPQHSLFNYFTKLVEQYTKILIPPKGLFSKLKKEAENPREVLDQVCYRVEWAKFQERERKKEEEEKEKERVAYAQIDWHDFVVVETVDFQPNEQGNFPPPTTPEELGARILIQERYEKFGESEEVEMEVESDEEDDKQEKAEEPPSQLDQDTQVQDMDEGSDDEEEGQKVPPPPETPMPPPLPPTPDQVIVRKDYDPKASKPLPPAPAPDEYLVSPITGEKIPASKMQEHMRIGLLDPRWLEQRDRSIREKQSDDEVYAPGLDIESSLKQLAERRTDIFGVEETAIGKKIGEEEIQKPEEKVTWDGHSGSMARTQQAAQANITLQEQIEAIHKAKGLVPEDDTKEKIGPSKPNEIPQQPPPPSSATNIPSSAPPITSVPRPPTMPPPVRTTVVSAVPVMPRPPMASVVRLPPGSVIAPMPPIIHAPRINVVPMPPSAPPIMAPRPPPMIVPTAFVPAPPVAPVPAPAPMPPVHPPPPMEDEPTSKKLKTEDSLMPEEEFLRRNKGPVSIKVQVPNMQDKTEWKLNGQVLVFTLPLTDQVSVIKVKIHEATGMPAGKQKLQYEGIFIKDSNSLAYYNMANGAVIHLALKERGGRKK.

The interval Met1–Ile43 is disordered. Positions Ala8 to Pro19 are enriched in pro residues. A Glycyl lysine isopeptide (Lys-Gly) (interchain with G-Cter in SUMO2) cross-link involves residue Lys20. Residues Gln21 to Ala34 are compositionally biased toward basic and acidic residues. The stretch at Ile52–Tyr94 is one SURP motif 1 repeat. Residue Lys55 is modified to N6-acetyllysine. Lys131 is covalently cross-linked (Glycyl lysine isopeptide (Lys-Gly) (interchain with G-Cter in SUMO2)). The stretch at Val166 to Phe208 is one SURP motif 2 repeat. The segment at Gly318–His428 is disordered. Ser320, Ser329, and Ser359 each carry phosphoserine. Acidic residues-rich tracts occupy residues Ser320–Asp334 and Asp354–Glu364. The span at Val368–Pro384 shows a compositional bias: pro residues. A compositionally biased stretch (basic and acidic residues) spans Ile388–Ala397. A Phosphoserine modification is found at Ser413. Residue Lys424 forms a Glycyl lysine isopeptide (Lys-Gly) (interchain with G-Cter in SUMO2) linkage. The residue at position 451 (Ser451) is a Phosphoserine. The residue at position 456 (Tyr456) is a Phosphotyrosine. The span at Ile488–Trp502 shows a compositional bias: basic and acidic residues. Disordered regions lie at residues Ile488–Ala518, His530–Pro584, and Ala665–Glu688. Lys499 is covalently cross-linked (Glycyl lysine isopeptide (Lys-Gly) (interchain with G-Cter in SUMO2)). Ser508 carries the phosphoserine modification. Positions Met509–Ala518 are enriched in polar residues. Lys542 is covalently cross-linked (Glycyl lysine isopeptide (Lys-Gly) (interchain with G-Cter in SUMO2)). Residues Ala665–Pro675 show a composition bias toward pro residues. The tract at residues Pro680 to Lys702 is required and sufficient for nuclear import. Lys686 is covalently cross-linked (Glycyl lysine isopeptide (Lys-Gly) (interchain with G-Cter in SUMO2)). Residues Ile707–Lys793 enclose the Ubiquitin-like domain. Position 759 is a phosphotyrosine (Tyr759).

As to quaternary structure, component of the 17S U2 SnRNP complex, a ribonucleoprotein complex that contains small nuclear RNA (snRNA) U2 and a number of specific proteins. Part of the SF3A subcomplex of the 17S U2 SnRNP complex which is composed of three subunits; SF3A3/SAP61, SF3A2/SAP62 and SF3A1/SAP114. SF3A associates with the splicing factor SF3B and a 12S RNA unit to form the mature 17S U2 small nuclear ribonucleoprotein complex (17S U2 snRNP). SF3A1 functions as a scaffold that interacts directly with both SF3A2 and SF3A3. Identified in the spliceosome 'E' complex, a precursor of the spliceosome 'A' complex. Identified in the spliceosome 'A' and 'B' complexes. Identified in the spliceosome 'C' complex. Interacts with P2RX6; resulting in a reduction of the splicing activity. In terms of tissue distribution, ubiquitously expressed.

It is found in the nucleus. The protein localises to the nucleus speckle. In terms of biological role, component of the 17S U2 SnRNP complex of the spliceosome, a large ribonucleoprotein complex that removes introns from transcribed pre-mRNAs. The 17S U2 SnRNP complex (1) directly participates in early spliceosome assembly and (2) mediates recognition of the intron branch site during pre-mRNA splicing by promoting the selection of the pre-mRNA branch-site adenosine, the nucleophile for the first step of splicing. Within the 17S U2 SnRNP complex, SF3A1 is part of the SF3A subcomplex that contributes to the assembly of the 17S U2 snRNP, and the subsequent assembly of the pre-spliceosome 'E' complex and the pre-catalytic spliceosome 'A' complex. Involved in pre-mRNA splicing as a component of pre-catalytic spliceosome 'B' complexes. This is Splicing factor 3A subunit 1 (SF3A1) from Homo sapiens (Human).